Here is a 452-residue protein sequence, read N- to C-terminus: Probable phosphoglucosamine mutase (452 aa).

Residue serine 96 is the Phosphoserine intermediate of the active site. Positions 96, 235, 237, and 239 each coordinate Mg(2+). Residue serine 96 is modified to Phosphoserine.

It belongs to the phosphohexose mutase family. It depends on Mg(2+) as a cofactor. In terms of processing, activated by phosphorylation.

It carries out the reaction alpha-D-glucosamine 1-phosphate = D-glucosamine 6-phosphate. Its function is as follows. Catalyzes the conversion of glucosamine-6-phosphate to glucosamine-1-phosphate. The protein is Probable phosphoglucosamine mutase of Methanopyrus kandleri (strain AV19 / DSM 6324 / JCM 9639 / NBRC 100938).